The chain runs to 474 residues: MSKKLHIKTWGCQMNEYDSSKMADLLDEYQGYTLTEEAEEADVLLLNTCSIREKAQEKVFHQLGRWKTLKDKNPNLIIGVGGCVASQEGKAIKDRAQCVDLIFGPQTLHRLPEMIEQIQQGGKAVIDVSFPEIEKFDRLPEPRAEGPSAFVSIMEGCSKYCSFCVVPYTRGEEVSRPVDDVILEIAQLAEQGVREVNLLGQNVNAYRGATHDDDICTFAELLRYVAAIDGIDRIRFTTSHPIEFTQDIIDVYEDTPELVSFLHLPVQSGSDLILTQMKRGHMAIEYKSIIRRLRKARPDIQISSDFIVGFPGESKQDFADTMKLIEDVQFDHSFSFIYSARPGTPASDLPDDVSLDEKKERLAILQDRITQQAMRYSRQMLGTVQRILVEGPSVKNPMELRGRTENNRVVNFEADPKHIGSFVDVEIVDVFTNSLRGKFIRGEDEMDLRRDLRPSDILAKHKKDDDLGVTQFIP.

The region spanning 3-120 is the MTTase N-terminal domain; the sequence is KKLHIKTWGC…LPEMIEQIQQ (118 aa). 6 residues coordinate [4Fe-4S] cluster: cysteine 12, cysteine 49, cysteine 83, cysteine 157, cysteine 161, and cysteine 164. The Radical SAM core domain maps to 143 to 375; it reads RAEGPSAFVS…QDRITQQAMR (233 aa). The TRAM domain maps to 378–441; that stretch reads RQMLGTVQRI…TNSLRGKFIR (64 aa).

Belongs to the methylthiotransferase family. MiaB subfamily. In terms of assembly, monomer. It depends on [4Fe-4S] cluster as a cofactor.

It localises to the cytoplasm. It carries out the reaction N(6)-dimethylallyladenosine(37) in tRNA + (sulfur carrier)-SH + AH2 + 2 S-adenosyl-L-methionine = 2-methylsulfanyl-N(6)-dimethylallyladenosine(37) in tRNA + (sulfur carrier)-H + 5'-deoxyadenosine + L-methionine + A + S-adenosyl-L-homocysteine + 2 H(+). Functionally, catalyzes the methylthiolation of N6-(dimethylallyl)adenosine (i(6)A), leading to the formation of 2-methylthio-N6-(dimethylallyl)adenosine (ms(2)i(6)A) at position 37 in tRNAs that read codons beginning with uridine. The protein is tRNA-2-methylthio-N(6)-dimethylallyladenosine synthase of Shewanella loihica (strain ATCC BAA-1088 / PV-4).